Here is a 237-residue protein sequence, read N- to C-terminus: Uridylate kinase (237 aa).

Position 9-12 (9-12) interacts with ATP; that stretch reads KLSG. Residue glycine 51 coordinates UMP. Residues glycine 52 and arginine 56 each coordinate ATP. Residues aspartate 71 and 132 to 139 each bind UMP; that span reads CGNPFFTT. ATP contacts are provided by threonine 159, tyrosine 165, and aspartate 168.

It belongs to the UMP kinase family. In terms of assembly, homohexamer.

Its subcellular location is the cytoplasm. It carries out the reaction UMP + ATP = UDP + ADP. Its pathway is pyrimidine metabolism; CTP biosynthesis via de novo pathway; UDP from UMP (UMPK route): step 1/1. With respect to regulation, inhibited by UTP. Catalyzes the reversible phosphorylation of UMP to UDP. This Prochlorococcus marinus (strain MIT 9303) protein is Uridylate kinase.